The sequence spans 194 residues: Large ribosomal subunit protein eL15 (194 aa).

The segment at alanine 164–arginine 194 is disordered. Residues arginine 166–glycine 175 show a composition bias toward basic residues.

Belongs to the eukaryotic ribosomal protein eL15 family.

This Archaeoglobus fulgidus (strain ATCC 49558 / DSM 4304 / JCM 9628 / NBRC 100126 / VC-16) protein is Large ribosomal subunit protein eL15 (rpl15e).